The chain runs to 440 residues: Calcium/calmodulin-regulated receptor-like kinase 1 (440 aa).

A helical transmembrane segment spans residues 8–28 (LIVGISLGLVIGVVLAISALF). The interval 28-228 (FCFRYHRKKS…ARGLEYLHDG (201 aa)) is calmodulin binding. The 268-residue stretch at 113-380 (CNFTTLIGQG…DIVQVLTRVI (268 aa)) folds into the Protein kinase domain. ATP is bound by residues 119–127 (IGQGAFGPV) and K141. Phosphotyrosine is present on Y186. The active-site Proton acceptor is the D237. A Phosphoserine modification is found at S241. Phosphothreonine is present on T274. Phosphotyrosine is present on Y282. Residues 369–440 (MRDIVQVLTR…DSSIAEDVIL (72 aa)) form a calmodulin binding region. The interval 386 to 427 (RKRQKNSPSPSPRLPPPPPIVEESEGELTANGSLRSEIHRRD) is disordered. The span at 394–405 (SPSPRLPPPPPI) shows a compositional bias: pro residues.

Belongs to the protein kinase superfamily. Ser/Thr protein kinase family. As to quaternary structure, interacts with calmodulin (CaM) in a calcium- (Ca(2+)-) dependent manner. Binds to MEKK1. In terms of tissue distribution, similar transcript expression levels in seedlings, roots, leaves, stems and flowers, and lower levels in siliques, but protein accumulates mostly in 7-day-old seedlings, old roots and young leaves and, to a lower extent, in young roots, old leaves, flowers and siliques (at protein level).

It is found in the cell membrane. The protein resides in the endosome membrane. It carries out the reaction L-seryl-[protein] + ATP = O-phospho-L-seryl-[protein] + ADP + H(+). The enzyme catalyses L-threonyl-[protein] + ATP = O-phospho-L-threonyl-[protein] + ADP + H(+). With respect to regulation, kinase activity is stimulated by calcium/calmodulin, but blocked by chlorpromazine. Its function is as follows. Required for cold tolerance, via the activation of MAP kinases activity. Phosphorylates and activates MEKK1 in response to cold in a calcium-dependent manner. The sequence is that of Calcium/calmodulin-regulated receptor-like kinase 1 from Arabidopsis thaliana (Mouse-ear cress).